The following is a 403-amino-acid chain: Large ribosomal subunit protein uL3 (403 aa).

The tract at residues 1 to 38 is disordered; the sequence is MSHRKFSAPRHGSLGFLPRKRSSRHRGKVKSFPKDDSS. Serine 13 carries the post-translational modification Phosphoserine. Positions 18–31 are enriched in basic residues; sequence PRKRSSRHRGKVKS. Lysine 39 participates in a covalent cross-link: Glycyl lysine isopeptide (Lys-Gly) (interchain with G-Cter in SUMO2). Lysine 136 carries the N6-acetyllysine modification. Residues lysine 224 and lysine 226 each participate in a glycyl lysine isopeptide (Lys-Gly) (interchain with G-Cter in SUMO2) cross-link. Residue histidine 245 is modified to Tele-methylhistidine. Lysine 286 and lysine 294 each carry N6-acetyllysine; alternate. Lysine 286 is covalently cross-linked (Glycyl lysine isopeptide (Lys-Gly) (interchain with G-Cter in SUMO2); alternate). A Glycyl lysine isopeptide (Lys-Gly) (interchain with G-Cter in SUMO1); alternate cross-link involves residue lysine 294. Residue serine 304 is modified to Phosphoserine. Residue lysine 366 is modified to N6-acetyllysine; alternate. Lysine 366 participates in a covalent cross-link: Glycyl lysine isopeptide (Lys-Gly) (interchain with G-Cter in SUMO2); alternate. At lysine 373 the chain carries N6-acetyllysine. Glycyl lysine isopeptide (Lys-Gly) (interchain with G-Cter in SUMO2) cross-links involve residues lysine 386, lysine 393, and lysine 399.

This sequence belongs to the universal ribosomal protein uL3 family. Component of the large ribosomal subunit. Interacts with DHX33. Post-translationally, constitutively monomethylated at His-245 by METTL18. Methylation at His-245 regulates translation elongation by slowing ribosome traversal on tyrosine codons: slower elongation provides enough time for proper folding of synthesized proteins and prevents cellular aggregation of tyrosine-rich proteins It is not required for incorporation of RPL3 into ribosomes.

The protein resides in the nucleus. It is found in the nucleolus. Its subcellular location is the cytoplasm. Component of the large ribosomal subunit. The ribosome is a large ribonucleoprotein complex responsible for the synthesis of proteins in the cell. In Sus scrofa (Pig), this protein is Large ribosomal subunit protein uL3 (RPL3).